Here is a 210-residue protein sequence, read N- to C-terminus: 7-carboxy-7-deazaguanine synthase (210 aa).

Residues 12–14 (LQG) and Arg27 contribute to the substrate site. Residues 18-210 (NAGRPAVFCR…MQTHKYLNIP (193 aa)) enclose the Radical SAM core domain. Positions 31, 46, and 49 each coordinate [4Fe-4S] cluster. 48–50 (FCD) lines the S-adenosyl-L-methionine pocket. Thr51 contacts Mg(2+). Thr90 contacts substrate. S-adenosyl-L-methionine is bound by residues Gly92, 133-135 (SPK), and 173-176 (QPMD). Pro210 contributes to the substrate binding site.

The protein belongs to the radical SAM superfamily. 7-carboxy-7-deazaguanine synthase family. In terms of assembly, homodimer. Requires [4Fe-4S] cluster as cofactor. It depends on S-adenosyl-L-methionine as a cofactor. Mg(2+) is required as a cofactor.

The enzyme catalyses 6-carboxy-5,6,7,8-tetrahydropterin + H(+) = 7-carboxy-7-deazaguanine + NH4(+). The protein operates within purine metabolism; 7-cyano-7-deazaguanine biosynthesis. Catalyzes the complex heterocyclic radical-mediated conversion of 6-carboxy-5,6,7,8-tetrahydropterin (CPH4) to 7-carboxy-7-deazaguanine (CDG), a step common to the biosynthetic pathways of all 7-deazapurine-containing compounds. The sequence is that of 7-carboxy-7-deazaguanine synthase from Burkholderia multivorans (strain ATCC 17616 / 249).